We begin with the raw amino-acid sequence, 90 residues long: Protein S100-A6 (90 aa).

2 EF-hand domains span residues 12–47 (LVAI…IGAK) and 48–83 (LQDA…LAMI). 2 residues coordinate Ca(2+): threonine 28 and glutamate 33. Lysine 40 bears the N6-acetyllysine mark. At lysine 47 the chain carries N6-acetyllysine; alternate. Residue lysine 47 is modified to N6-succinyllysine; alternate. Ca(2+) is bound by residues aspartate 61, asparagine 63, aspartate 65, and glutamate 72.

This sequence belongs to the S-100 family. In terms of assembly, homodimer; head to tail assembly of 2 subunits. Interacts with CACYBP in a calcium-dependent manner. Interacts with ANXA2 and ANXA11 (via N-terminus). Interacts with SUGT1. Interacts with TP53; has higher affinity for TP53 that is phosphorylated on its N-terminal domain, and lower affinity for TP53 that is phosphorylated on its C-terminal domain. Interacts with tropomyosin. Interacts with FKBP4. Interacts with PPP5C (via TPR repeats); the interaction is calcium-dependent and modulates PPP5C activity. Interacts with TPPP; this interaction inhibits TPPP dimerization.

It is found in the nucleus envelope. The protein resides in the cytoplasm. The protein localises to the cell membrane. In terms of biological role, may function as calcium sensor and modulator, contributing to cellular calcium signaling. May function by interacting with other proteins, such as TPR-containing proteins, and indirectly play a role in many physiological processes such as the reorganization of the actin cytoskeleton and in cell motility. Binds 2 calcium ions. Calcium binding is cooperative. This chain is Protein S100-A6 (S100A6), found in Sus scrofa (Pig).